Reading from the N-terminus, the 110-residue chain is UPF0060 membrane protein Rpic_4131 (110 aa).

Helical transmembrane passes span 8-28 (VLFA…WLVL), 33-53 (PFWL…LLTL), 65-85 (YGGV…GVAL), and 88-108 (WDVG…LQPQ).

Belongs to the UPF0060 family.

It is found in the cell inner membrane. The protein is UPF0060 membrane protein Rpic_4131 of Ralstonia pickettii (strain 12J).